We begin with the raw amino-acid sequence, 80 residues long: Protein CEBPZOS (80 aa).

The helical transmembrane segment at glycine 15–phenylalanine 31 threads the bilayer.

It localises to the mitochondrion membrane. The chain is Protein CEBPZOS from Mus musculus (Mouse).